Consider the following 827-residue polypeptide: Transcription factor SOX-6 (827 aa).

The segment covering M1–F10 has biased composition (polar residues). The disordered stretch occupies residues M1 to P51. A compositionally biased stretch (basic and acidic residues) spans T25–D34. T119 is modified (phosphothreonine). Residues L184–Q257 are a coiled coil. 2 disordered regions span residues H329–S360 and S380–G470. Basic and acidic residues predominate over residues G341–G357. A Phosphoserine modification is found at S399. Phosphothreonine is present on T401. Glycyl lysine isopeptide (Lys-Gly) (interchain with G-Cter in SUMO) cross-links involve residues K404 and K417. 2 stretches are compositionally biased toward polar residues: residues T421–P431 and S439–K461. S439 and S442 each carry phosphoserine. Positions I620–K688 form a DNA-binding region, HMG box. Disordered stretches follow at residues T752–L772 and A786–N827. Acidic residues predominate over residues N795–D808.

As to quaternary structure, homodimer. Interacts with DAZAP2. May interact with CENPK. Sumoylation inhibits the transcriptional activity.

Its subcellular location is the nucleus. The protein resides in the cytoplasm. Its function is as follows. Transcription factor that plays a key role in several developmental processes, including neurogenesis, chondrocytes differentiation and cartilage formation. Specifically binds the 5'-AACAAT-3' DNA motif present in enhancers and super-enhancers and promotes expression of genes important for chondrogenesis. Required for overt chondrogenesis when condensed prechondrocytes differentiate into early stage chondrocytes: SOX5 and SOX6 cooperatively bind with SOX9 on active enhancers and super-enhancers associated with cartilage-specific genes, and thereby potentiate SOX9's ability to transactivate. Not involved in precartilaginous condensation, the first step in chondrogenesis, during which skeletal progenitors differentiate into prechondrocytes. Together with SOX5, required to form and maintain a pool of highly proliferating chondroblasts between epiphyses and metaphyses, to form columnar chondroblasts, delay chondrocyte prehypertrophy but promote hypertrophy, and to delay terminal differentiation of chondrocytes on contact with ossification fronts. Binds to the proximal promoter region of the myelin protein MPZ gene, and is thereby involved in the differentiation of oligodendroglia in the developing spinal tube. Binds to the gene promoter of MBP and acts as a transcriptional repressor. This is Transcription factor SOX-6 from Rattus norvegicus (Rat).